We begin with the raw amino-acid sequence, 318 residues long: Ubiquitin-like domain-containing CTD phosphatase 1 (318 aa).

An N-acetylalanine modification is found at Ala2. The Ubiquitin-like domain maps to 3-81 (LPIIVKWGGQ…IMMMGTREES (79 aa)). Lys117 bears the N6-acetyllysine mark. The 162-residue stretch at 133 to 294 (PREGKKLLVL…LKLTQYLKEI (162 aa)) folds into the FCP1 homology domain. Residues Asp143, Asp145, and Asp253 each contribute to the Mg(2+) site.

Mg(2+) serves as cofactor.

The protein localises to the nucleus. It carries out the reaction O-phospho-L-seryl-[protein] + H2O = L-seryl-[protein] + phosphate. The catalysed reaction is O-phospho-L-threonyl-[protein] + H2O = L-threonyl-[protein] + phosphate. Functionally, dephosphorylates 26S nuclear proteasomes, thereby decreasing their proteolytic activity. Recruited to the 19S regulatory particle of the 26S proteasome through its interaction with 19S component PSMD2/RPN1. Once recruited, dephosphorylates 19S component PSMC2/RPT1 which impairs PSMC2 ATPase activity and disrupts 26S proteasome assembly. Has also been reported to stimulate the proteolytic activity of the 26S proteasome. This Pongo abelii (Sumatran orangutan) protein is Ubiquitin-like domain-containing CTD phosphatase 1 (UBLCP1).